The sequence spans 273 residues: MLLIDVGNSHVVFGIQGENGGRVCVRELFRLAPDARKTQDEYSLLIHALCERAGVGRASLRDAFISSVVPVLTKTVADAVAQISGVQPVVFGPWAYEHLPVRIPEPVRAEIGTDLVANAVAAYVHFRSACVVVDCGTALTFTAVDGTGLIQGVAIAPGLRTAVQSLHTGTAQLPLVPLALPDSVLGKDTTHAVQAGVVRGTLFVIRAMIAQCQKELGCRCAAVITGGLSRLFSSEVDFPPIDAQLTLSGLAHIARLVPTSLLPPATVSGSSGN.

5–12 (DVGNSHVV) contacts ATP. Position 112-115 (112-115 (GTDL)) interacts with substrate. Asp114 serves as the catalytic Proton acceptor. Asp134 provides a ligand contact to K(+). Residue Thr137 coordinates ATP. Thr189 provides a ligand contact to substrate.

This sequence belongs to the type III pantothenate kinase family. In terms of assembly, homodimer. NH4(+) is required as a cofactor. It depends on K(+) as a cofactor.

It is found in the cytoplasm. The enzyme catalyses (R)-pantothenate + ATP = (R)-4'-phosphopantothenate + ADP + H(+). It functions in the pathway cofactor biosynthesis; coenzyme A biosynthesis; CoA from (R)-pantothenate: step 1/5. Functionally, catalyzes the phosphorylation of pantothenate (Pan), the first step in CoA biosynthesis. The chain is Type III pantothenate kinase from Treponema pallidum subsp. pallidum (strain SS14).